The following is a 371-amino-acid chain: D-alanine--D-alanine ligase (371 aa).

An ATP-grasp domain is found at 154-361 (KKLLVAEGLP…YPTLLAAMVD (208 aa)). 182–237 (RERLGLPVFVKPARGGSSIGVSRVSDWAELPAAIEAARRHDPKVIVEAGIAGRELE) is an ATP binding site. Mg(2+) contacts are provided by aspartate 316, glutamate 328, and asparagine 330.

It belongs to the D-alanine--D-alanine ligase family. Requires Mg(2+) as cofactor. Mn(2+) serves as cofactor.

Its subcellular location is the cytoplasm. It carries out the reaction 2 D-alanine + ATP = D-alanyl-D-alanine + ADP + phosphate + H(+). The protein operates within cell wall biogenesis; peptidoglycan biosynthesis. Cell wall formation. The chain is D-alanine--D-alanine ligase from Mycobacterium sp. (strain JLS).